A 151-amino-acid polypeptide reads, in one-letter code: Deoxyuridine 5'-triphosphate nucleotidohydrolase (151 aa).

Substrate contacts are provided by residues 70–72 (RSG), Asn83, 87–89 (LID), and Met97.

Belongs to the dUTPase family. Mg(2+) serves as cofactor.

The catalysed reaction is dUTP + H2O = dUMP + diphosphate + H(+). The protein operates within pyrimidine metabolism; dUMP biosynthesis; dUMP from dCTP (dUTP route): step 2/2. Functionally, this enzyme is involved in nucleotide metabolism: it produces dUMP, the immediate precursor of thymidine nucleotides and it decreases the intracellular concentration of dUTP so that uracil cannot be incorporated into DNA. This is Deoxyuridine 5'-triphosphate nucleotidohydrolase from Pseudomonas entomophila (strain L48).